Here is a 582-residue protein sequence, read N- to C-terminus: 15-cis-phytoene desaturase, chloroplastic/chromoplastic (582 aa).

Residues 1–93 (MNLLGSISTG…ELENTINFLE (93 aa)) constitute a chloroplast and chromoplast transit peptide. Residues Ala-121, 140–141 (EA), Lys-148, 165–166 (HI), and Tyr-171 contribute to the FAD site. Arg-306 is a substrate binding site. Residue Asp-537 participates in FAD binding. Ala-545 serves as a coordination point for substrate. Met-547 contacts FAD.

Belongs to the carotenoid/retinoid oxidoreductase family. Homotetramer. FAD serves as cofactor. Expressed in flower buds and lips. Lower expression in leaves and roots.

It is found in the plastid. Its subcellular location is the chloroplast. The protein localises to the chromoplast. The protein resides in the membrane. The enzyme catalyses 2 a plastoquinone + 15-cis-phytoene = 9,9',15-tri-cis-zeta-carotene + 2 a plastoquinol. Its pathway is carotenoid biosynthesis; lycopene biosynthesis. Its function is as follows. Converts phytoene into zeta-carotene via the intermediary of phytofluene by the symmetrical introduction of two double bonds at the C-11 and C-11' positions of phytoene with a concomitant isomerization of two neighboring double bonds at the C9 and C9' positions from trans to cis. This chain is 15-cis-phytoene desaturase, chloroplastic/chromoplastic (PDS), found in Oncidium hybrid cultivar (Orchid).